The following is a 199-amino-acid chain: Ion-translocating oxidoreductase complex subunit A (199 aa).

6 helical membrane passes run 8–28 (LFTI…QFLG), 49–69 (VVFV…FILV), 75–95 (FLRT…VEFI), 106–126 (SLGI…AVLL), 138–158 (VVFG…MAAI), and 178–198 (AFFI…VIPL).

The protein belongs to the NqrDE/RnfAE family. In terms of assembly, the Rnf complex is probably composed of eight subunits, including RnfA, RnfB, RnfC, RnfD, RnfE and RnfG.

Its subcellular location is the cell membrane. Part of a membrane-bound complex that couples electron transfer with translocation of ions across the membrane. Catalyzes Na(+) transport, most probably coupled to electron transfer from reduced ferredoxin to methanophenazine and heterodisulfide reductase. Involved in heterodisulfide reduction during methanogenesis from acetate. This chain is Ion-translocating oxidoreductase complex subunit A, found in Methanosarcina acetivorans (strain ATCC 35395 / DSM 2834 / JCM 12185 / C2A).